A 149-amino-acid polypeptide reads, in one-letter code: UPF0756 membrane protein MS1439 (149 aa).

The next 4 helical transmembrane spans lie at 10–32 (IMLVVLILLGVLSNNNSITISAL), 56–76 (VGIIILTVGVLAPLVSGKVQL), 82–102 (FLNWQMFLSIVIGIAVAWFAG), and 126–146 (VAFLGGIPVGPLIAAGILAVI).

Belongs to the UPF0756 family.

It is found in the cell membrane. The chain is UPF0756 membrane protein MS1439 from Mannheimia succiniciproducens (strain KCTC 0769BP / MBEL55E).